The chain runs to 98 residues: NADH-ubiquinone oxidoreductase chain 4L (98 aa).

Helical transmembrane passes span 1 to 21 (MSLV…GLLM), 25 to 45 (HLMS…VMAT), and 59 to 81 (MPII…LVMV).

This sequence belongs to the complex I subunit 4L family. As to quaternary structure, core subunit of respiratory chain NADH dehydrogenase (Complex I) which is composed of 45 different subunits.

It is found in the mitochondrion inner membrane. The enzyme catalyses a ubiquinone + NADH + 5 H(+)(in) = a ubiquinol + NAD(+) + 4 H(+)(out). Its function is as follows. Core subunit of the mitochondrial membrane respiratory chain NADH dehydrogenase (Complex I) which catalyzes electron transfer from NADH through the respiratory chain, using ubiquinone as an electron acceptor. Part of the enzyme membrane arm which is embedded in the lipid bilayer and involved in proton translocation. This chain is NADH-ubiquinone oxidoreductase chain 4L (MT-ND4L), found in Equus caballus (Horse).